A 391-amino-acid chain; its full sequence is Yellow-related salivary protein ASP4 (391 aa).

Residues 1-18 form the signal peptide; that stretch reads MKIFLCIIAVVSLQGVVA. The N-linked (GlcNAc...) asparagine glycan is linked to N29.

It belongs to the major royal jelly protein family. Female salivary gland (at protein level).

The protein resides in the secreted. In terms of biological role, probably modulates blood feeding of sand flies on vertebrate species by binding and sequestering different mediators involved in the host response. Binds biogenic amines. Binds serotonin and dopamine with high affinity. Binds adrenaline, octopamine and adrenaline with medium affinity. Binds histamine with low affinity. In Phlebotomus orientalis (Phlebotomine sand fly), this protein is Yellow-related salivary protein ASP4.